A 506-amino-acid polypeptide reads, in one-letter code: Aldehyde dehydrogenase (506 aa).

218–224 (GFGLEAG) is a binding site for NAD(+). Active-site residues include Glu-262 and Cys-301.

Belongs to the aldehyde dehydrogenase family.

The catalysed reaction is an aldehyde + NAD(+) + H2O = a carboxylate + NADH + 2 H(+). In Rhodospirillum rubrum (strain ATCC 11170 / ATH 1.1.1 / DSM 467 / LMG 4362 / NCIMB 8255 / S1), this protein is Aldehyde dehydrogenase.